We begin with the raw amino-acid sequence, 390 residues long: Cytochrome b (390 aa).

Transmembrane regions (helical) follow at residues Met-32 to Met-52, Trp-76 to Gly-98, Leu-113 to Cys-133, and Phe-179 to Met-199. Positions 82 and 96 each coordinate heme b. Heme b is bound by residues His-183 and His-197. His-202 lines the a ubiquinone pocket. 4 helical membrane passes run Phe-225–Phe-245, Leu-289–Asp-309, Leu-321–Ala-341, and Tyr-348–Pro-368.

The protein belongs to the cytochrome b family. As to quaternary structure, fungal cytochrome b-c1 complex contains 10 subunits; 3 respiratory subunits, 2 core proteins and 5 low-molecular weight proteins. Cytochrome b-c1 complex is a homodimer. It depends on heme b as a cofactor.

Its subcellular location is the mitochondrion inner membrane. Its function is as follows. Component of the ubiquinol-cytochrome c reductase complex (complex III or cytochrome b-c1 complex) that is part of the mitochondrial respiratory chain. The b-c1 complex mediates electron transfer from ubiquinol to cytochrome c. Contributes to the generation of a proton gradient across the mitochondrial membrane that is then used for ATP synthesis. The polypeptide is Cytochrome b (COB) (Naumovozyma castellii (Yeast)).